The chain runs to 283 residues: Protein-L-isoaspartate O-methyltransferase (283 aa).

S122 is a catalytic residue.

Belongs to the methyltransferase superfamily. L-isoaspartyl/D-aspartyl protein methyltransferase family.

It is found in the cytoplasm. The enzyme catalyses [protein]-L-isoaspartate + S-adenosyl-L-methionine = [protein]-L-isoaspartate alpha-methyl ester + S-adenosyl-L-homocysteine. In terms of biological role, catalyzes the methyl esterification of L-isoaspartyl residues in peptides and proteins that result from spontaneous decomposition of normal L-aspartyl and L-asparaginyl residues. It plays a role in the repair and/or degradation of damaged proteins. The polypeptide is Protein-L-isoaspartate O-methyltransferase (Leptothrix cholodnii (strain ATCC 51168 / LMG 8142 / SP-6) (Leptothrix discophora (strain SP-6))).